The following is a 252-amino-acid chain: Trans-aconitate 2-methyltransferase (252 aa).

Belongs to the methyltransferase superfamily. Tam family.

The protein localises to the cytoplasm. The enzyme catalyses trans-aconitate + S-adenosyl-L-methionine = (E)-3-(methoxycarbonyl)pent-2-enedioate + S-adenosyl-L-homocysteine. Functionally, catalyzes the S-adenosylmethionine monomethyl esterification of trans-aconitate. This is Trans-aconitate 2-methyltransferase from Shigella flexneri serotype 5b (strain 8401).